A 408-amino-acid chain; its full sequence is MALVNGNYLKLKAGYLFPEIGRRVKAFSEANPDAALIRLGIGDVTEPLPQACRDAMKNAIDEMGTREGFHGYGPEQGYAWLREAIAKHDFQSRGCDISAEEIFVSDGSKCDSSNILDILGEGNRIAVTDPVYPVYVDSNVMAGRTGDANEGGQYGGLSYLPITAANDFTAPLPSTPVDLIYLCFPNNPTGAVASREQLKSWVDYALEHKALILFDAAYEAFIQDPAIPHSIFEIEGARQCAIEFRSFSKNAGFTGTRCALTVVPKGLMGTSATGEQVELWGLWNRRQSTKFNGVSYIVQRGAEAVYSEQGQAEVKALINFYMENAAIIRRELSAAGLTIYGGEHAPYVWIKTPEGMDSWGFFDHLLNRANVVGTPGSGFGAAGEGYFRLSAFNSRSNVDEAMRRIRAL.

Substrate is bound by residues Tyr-15 and Gly-42. Pyridoxal 5'-phosphate-binding positions include Tyr-72, 108–109 (SK), Tyr-132, Asn-187, Tyr-218, and 246–248 (SFS). Substrate-binding residues include Lys-109, Tyr-132, and Asn-187. Lys-249 carries the post-translational modification N6-(pyridoxal phosphate)lysine. Pyridoxal 5'-phosphate contacts are provided by Arg-257 and Asn-292. Asn-292 and Arg-388 together coordinate substrate.

This sequence belongs to the class-I pyridoxal-phosphate-dependent aminotransferase family. LL-diaminopimelate aminotransferase subfamily. Homodimer. Pyridoxal 5'-phosphate is required as a cofactor.

The enzyme catalyses (2S,6S)-2,6-diaminopimelate + 2-oxoglutarate = (S)-2,3,4,5-tetrahydrodipicolinate + L-glutamate + H2O + H(+). The protein operates within amino-acid biosynthesis; L-lysine biosynthesis via DAP pathway; LL-2,6-diaminopimelate from (S)-tetrahydrodipicolinate (aminotransferase route): step 1/1. Its function is as follows. Involved in the synthesis of meso-diaminopimelate (m-DAP or DL-DAP), required for both lysine and peptidoglycan biosynthesis. Catalyzes the direct conversion of tetrahydrodipicolinate to LL-diaminopimelate. The chain is LL-diaminopimelate aminotransferase from Synechococcus sp. (strain RCC307).